We begin with the raw amino-acid sequence, 207 residues long: Small ribosomal subunit protein uS4 (207 aa).

Residues 96-159 (RRLDNVVYRL…RASTFIADNI (64 aa)) enclose the S4 RNA-binding domain.

The protein belongs to the universal ribosomal protein uS4 family. Part of the 30S ribosomal subunit. Contacts protein S5. The interaction surface between S4 and S5 is involved in control of translational fidelity.

In terms of biological role, one of the primary rRNA binding proteins, it binds directly to 16S rRNA where it nucleates assembly of the body of the 30S subunit. With S5 and S12 plays an important role in translational accuracy. This chain is Small ribosomal subunit protein uS4, found in Leptospira borgpetersenii serovar Hardjo-bovis (strain JB197).